A 162-amino-acid chain; its full sequence is NADH-quinone oxidoreductase subunit I (162 aa).

2 consecutive 4Fe-4S ferredoxin-type domains span residues 52–82 (LRRYPNGEERCIACKLCEAVCPAQAITIEAG) and 93–122 (TRYDIDMVKCIYCGMCQEACPVDAIVEGPN). [4Fe-4S] cluster-binding residues include Cys-62, Cys-65, Cys-68, Cys-72, Cys-102, Cys-105, Cys-108, and Cys-112.

The protein belongs to the complex I 23 kDa subunit family. As to quaternary structure, NDH-1 is composed of 14 different subunits. Subunits NuoA, H, J, K, L, M, N constitute the membrane sector of the complex. The cofactor is [4Fe-4S] cluster.

The protein resides in the cell inner membrane. The enzyme catalyses a quinone + NADH + 5 H(+)(in) = a quinol + NAD(+) + 4 H(+)(out). Functionally, NDH-1 shuttles electrons from NADH, via FMN and iron-sulfur (Fe-S) centers, to quinones in the respiratory chain. The immediate electron acceptor for the enzyme in this species is believed to be ubiquinone. Couples the redox reaction to proton translocation (for every two electrons transferred, four hydrogen ions are translocated across the cytoplasmic membrane), and thus conserves the redox energy in a proton gradient. This Methylobacterium sp. (strain 4-46) protein is NADH-quinone oxidoreductase subunit I.